Consider the following 136-residue polypeptide: Phospholipase A2 (136 aa).

Positions 8, 10, and 12 each coordinate Ca(2+). Disulfide bonds link cysteine 9/cysteine 31, cysteine 30/cysteine 70, cysteine 37/cysteine 63, cysteine 61/cysteine 95, and cysteine 105/cysteine 117. Asparagine 16 carries N-linked (GlcNAc...) asparagine glycosylation. The active site involves histidine 34. Aspartate 35 contributes to the Ca(2+) binding site. Aspartate 64 is a catalytic residue.

It belongs to the phospholipase A2 family. The cofactor is Ca(2+). As to expression, expressed by the venom gland.

Its subcellular location is the secreted. It carries out the reaction a 1,2-diacyl-sn-glycero-3-phosphocholine + H2O = a 1-acyl-sn-glycero-3-phosphocholine + a fatty acid + H(+). Functionally, PLA2 catalyzes the calcium-dependent hydrolysis of the 2-acyl groups in 3-sn-phosphoglycerides. The sequence is that of Phospholipase A2 from Bombus terrestris (Buff-tailed bumblebee).